The following is an 81-amino-acid chain: Photosystem I iron-sulfur center (81 aa).

2 4Fe-4S ferredoxin-type domains span residues 2–31 (AHSV…MIPW) and 39–68 (IASA…VRVY). [4Fe-4S] cluster-binding residues include Cys11, Cys14, Cys17, Cys21, Cys48, Cys51, Cys54, and Cys58.

As to quaternary structure, the eukaryotic PSI reaction center is composed of at least 11 subunits. Requires [4Fe-4S] cluster as cofactor.

It is found in the plastid. The protein localises to the chloroplast thylakoid membrane. It carries out the reaction reduced [plastocyanin] + hnu + oxidized [2Fe-2S]-[ferredoxin] = oxidized [plastocyanin] + reduced [2Fe-2S]-[ferredoxin]. Its function is as follows. Apoprotein for the two 4Fe-4S centers FA and FB of photosystem I (PSI); essential for photochemical activity. FB is the terminal electron acceptor of PSI, donating electrons to ferredoxin. The C-terminus interacts with PsaA/B/D and helps assemble the protein into the PSI complex. Required for binding of PsaD and PsaE to PSI. PSI is a plastocyanin-ferredoxin oxidoreductase, converting photonic excitation into a charge separation, which transfers an electron from the donor P700 chlorophyll pair to the spectroscopically characterized acceptors A0, A1, FX, FA and FB in turn. This is Photosystem I iron-sulfur center from Pinus thunbergii (Japanese black pine).